The primary structure comprises 166 residues: Flagellar assembly factor FliW (166 aa).

It belongs to the FliW family. In terms of assembly, interacts with translational regulator CsrA and flagellin(s).

It localises to the cytoplasm. Acts as an anti-CsrA protein, binds CsrA and prevents it from repressing translation of its target genes, one of which is flagellin. Binds to flagellin and participates in the assembly of the flagellum. This chain is Flagellar assembly factor FliW, found in Desulfovibrio desulfuricans (strain ATCC 27774 / DSM 6949 / MB).